Reading from the N-terminus, the 476-residue chain is Glycogen synthase (476 aa).

Lysine 15 contributes to the ADP-alpha-D-glucose binding site.

Belongs to the glycosyltransferase 1 family. Bacterial/plant glycogen synthase subfamily.

The catalysed reaction is [(1-&gt;4)-alpha-D-glucosyl](n) + ADP-alpha-D-glucose = [(1-&gt;4)-alpha-D-glucosyl](n+1) + ADP + H(+). It participates in glycan biosynthesis; glycogen biosynthesis. Its function is as follows. Synthesizes alpha-1,4-glucan chains using ADP-glucose. This Ligilactobacillus salivarius (strain UCC118) (Lactobacillus salivarius) protein is Glycogen synthase.